A 146-amino-acid polypeptide reads, in one-letter code: Hemoglobin subunit beta (146 aa).

The Globin domain maps to 2 to 146; sequence HWTAEEKQLI…VAHALARKYH (145 aa). Residues histidine 63 and histidine 92 each contribute to the heme b site.

This sequence belongs to the globin family. Heterotetramer of two alpha chains and two beta chains. As to expression, red blood cells.

Functionally, involved in oxygen transport from the lung to the various peripheral tissues. The protein is Hemoglobin subunit beta (HBB) of Aegypius monachus (Cinereous vulture).